The sequence spans 374 residues: Calcium/calmodulin-dependent protein kinase type 1 (374 aa).

One can recognise a Protein kinase domain in the interval 20–276; it reads YDFRDVLGTG…CEQALQHPWI (257 aa). ATP is bound by residues 26–34 and K49; that span reads LGTGAFSEV. A Glycyl lysine isopeptide (Lys-Gly) (interchain with G-Cter in ubiquitin) cross-link involves residue K59. D141 acts as the Proton acceptor in catalysis. Position 177 is a phosphothreonine; by CaMKK1 and CaMKK2 (T177). An Involved in nuclear import motif is present at residues 263 to 264; it reads KR. The tract at residues 276–316 is autoinhibitory domain; the sequence is IAGDTALDKNIHQSVSEQIKKNFAKSKWKQAFNATAVVRHM. Residues 296-317 are calmodulin-binding; that stretch reads KNFAKSKWKQAFNATAVVRHMR. The Nuclear export signal motif lies at 315–321; it reads HMRKLQL.

The protein belongs to the protein kinase superfamily. CAMK Ser/Thr protein kinase family. CaMK subfamily. In terms of assembly, monomer. Interacts with XPO1. Phosphorylated by CaMKK1 and CaMKK2 on Thr-177. Post-translationally, polybiquitinated by the E3 ubiquitin-protein ligase complex SCF(FBXL12), leading to proteasomal degradation. In terms of tissue distribution, widely expressed.

It is found in the cytoplasm. It localises to the nucleus. It carries out the reaction L-seryl-[protein] + ATP = O-phospho-L-seryl-[protein] + ADP + H(+). The enzyme catalyses L-threonyl-[protein] + ATP = O-phospho-L-threonyl-[protein] + ADP + H(+). Its activity is regulated as follows. Activated by Ca(2+)/calmodulin. Binding of calmodulin results in conformational change that relieves intrasteric autoinhibition and allows phosphorylation of Thr-177 within the activation loop by CaMKK1 or CaMKK2. Phosphorylation of Thr-177 results in several fold increase in total activity. Unlike CaMK4, is unable to exhibit autonomous activity after Ca(2+)/calmodulin activation. Its function is as follows. Calcium/calmodulin-dependent protein kinase that operates in the calcium-triggered CaMKK-CaMK1 signaling cascade and, upon calcium influx, regulates transcription activators activity, cell cycle, hormone production, cell differentiation, actin filament organization and neurite outgrowth. Recognizes the substrate consensus sequence [MVLIF]-x-R-x(2)-[ST]-x(3)-[MVLIF]. Regulates axonal extension and growth cone motility in hippocampal and cerebellar nerve cells. Upon NMDA receptor-mediated Ca(2+) elevation, promotes dendritic growth in hippocampal neurons and is essential in synapses for full long-term potentiation (LTP) and ERK2-dependent translational activation. Downstream of NMDA receptors, promotes the formation of spines and synapses in hippocampal neurons by phosphorylating ARHGEF7/BETAPIX on 'Ser-516', which results in the enhancement of ARHGEF7 activity and activation of RAC1. Promotes neuronal differentiation and neurite outgrowth by activation and phosphorylation of MARK2 on 'Ser-91', 'Ser-92', 'Ser-93' and 'Ser-294'. Promotes nuclear export of HDAC5 and binding to 14-3-3 by phosphorylation of 'Ser-259' and 'Ser-498' in the regulation of muscle cell differentiation. Regulates NUMB-mediated endocytosis by phosphorylation of NUMB on 'Ser-275' and 'Ser-294'. Involved in the regulation of basal and estrogen-stimulated migration of medulloblastoma cells through ARHGEF7/BETAPIX phosphorylation. Is required for proper activation of cyclin-D1/CDK4 complex during G1 progression in diploid fibroblasts. Plays a role in K(+) and ANG2-mediated regulation of the aldosterone synthase (CYP11B2) to produce aldosterone in the adrenal cortex. Phosphorylates EIF4G3/eIF4GII. In vitro phosphorylates CREB1, ATF1, CFTR, MYL9 and SYN1/synapsin I. The chain is Calcium/calmodulin-dependent protein kinase type 1 (Camk1) from Rattus norvegicus (Rat).